A 666-amino-acid polypeptide reads, in one-letter code: Peptidase S41 family protein phomP1 (666 aa).

The signal sequence occupies residues 1-27 (MSSFLVQTAVVRLFLLGVVFWFPFALS). N-linked (GlcNAc...) asparagine glycans are attached at residues N70, N214, and N234. A peptidase S41 domain region spans residues 303–504 (DVAVLQITSF…LLQAQGVRTV (202 aa)). Residues N555 and N612 are each glycosylated (N-linked (GlcNAc...) asparagine).

The protein belongs to the peptidase S41A family.

It functions in the pathway mycotoxin biosynthesis. In terms of biological role, peptidase S41 family protein; part of the gene cluster that mediates the biosynthesis of the phomopsins, a group of hexapeptide mycotoxins which infects lupins and causes lupinosis disease in livestock. Within the pathway, phomP1 and phomP1' are probably involved in the processing of the phomA and phomA' precursors. The pathway starts with the processing of the precursor phomA by several endopeptidases including kexin proteases as well as the cluster-specific S41 family peptidase phomP1 and the oligopeptidase phomG to produce 10 identical copies of the hexapeptide Tyr-Val-Ile-Pro-Ile-Asp. After being excised from the precursor peptide, the core peptides are cyclized and modified post-translationally by enzymes encoded within the gene cluster. The timing and order of proteolysis of the phomA precursor and PTMs are still unknown. Two tyrosinase-like enzymes, phomQ1 and phomQ2, catalyze the chlorination and hydroxylation of Tyr, respectively. PhomYb, is proposed to be involved in the construction of the macrocyclic structure. The other 4 ustYa family proteins may be involved in PTMs that generate the unique structure of phomopsin A. PhomYa is required for the hydroxylation of C-beta of Tyr. PhomYc, phomYd, and phomYe are responsible for the biosynthesis of 2,3-dehydroisoleucine (dIle), 2,3-dehydroaspartic acid (dAsp), and 3,4-dehydroproline (dPro), respectively. While dIle formation by phomYc is indispensable for the installation of dAsp by phomYd, the order of the other PTMs have not been elucidated yet. Most of the biosynthetic enzymes likely have broad substrate specificity, and thus, there might be a metabolic grid from a precursor to phomopsin A. The enzyme(s) responsible for the biosynthesis of 3,4-dehydrovaline (dVal) have also not been identified yet. Finally, phomM acts as an S-adenosylmethionine-dependent alpha-N-methyltransferase that catalyzes two successive N-methylation reactions, converting N-desmethyl-phomopsin A to phomopsin A and phomopsin A further to an N,N-dimethylated congener called phomopsin E. In Diaporthe leptostromiformis (Lupinosis disease fungus), this protein is Peptidase S41 family protein phomP1.